The sequence spans 154 residues: Hexachlorocyclohexane dehydrochlorinase 1 (154 aa).

Residue D25 is part of the active site. H73 serves as the catalytic Proton acceptor.

Belongs to the HCH dehydrochlorinase family. Homotrimer.

Its subcellular location is the periplasm. The enzyme catalyses gamma-hexachlorocyclohexane = (3R,4S,5S,6R)-pentachlorocyclohexene + chloride + H(+). The catalysed reaction is (3R,4S,5S,6R)-pentachlorocyclohexene = (3R,6R)-1,3,4,6-tetrachlorocyclohexa-1,4-diene + chloride + H(+). Its pathway is xenobiotic degradation; hexachlorocyclohexane degradation. Its function is as follows. Catalyzes the conversion of the important environmental pollutant gamma-hexachlorocyclohexane (gamma-HCH or lindane) to 1,3,4,6-tetrachloro-1,4-cyclohexadiene (1,4-TCDN) via gamma-pentachlorocyclohexene (gamma-PCCH). Proceeds by two successive 1,2-anti conformationally dependent dehydrochlorinations. Also shows activity with alpha- and delta-HCH, giving alpha- and delta-PCCH respectively, but not with the beta isomer. This Sphingobium indicum (strain DSM 16412 / CCM 7286 / MTCC 6364 / B90A) protein is Hexachlorocyclohexane dehydrochlorinase 1.